We begin with the raw amino-acid sequence, 367 residues long: Probable butyrate kinase (367 aa).

Belongs to the acetokinase family.

Its subcellular location is the cytoplasm. The enzyme catalyses butanoate + ATP = butanoyl phosphate + ADP. The chain is Probable butyrate kinase from Bacillus cereus (strain B4264).